We begin with the raw amino-acid sequence, 325 residues long: MINFQLIDGEALLARLQPTLGGIKGKLTPNMDMQKVTWFRTGGLAELFYQPADEVDLAFFLQNLPESIPVTIVGIGSNLLVRDGGIPGVVIRLSAKGFGQVQQVSPTGFLVGAATADKHLAAAALEAEIAGFHFYHGIPGGLGGALKMNAGANGVETAARVVEVYALDRRGQCHTLSLADMHYSYRHCAVPEDFIFTAALLEGKPGNKGDIRAAMDEVALHRESVQPVREKTGGSTFRNPKDISAWRVIDEAGCRGLQIGGAQMSEMHCNFMINTGQATAYDLEALGETVRARVFAYSSHLLQWEIQRIGQFEQGRIVSSFDPFN.

The region spanning 40-221 (RTGGLAELFY…RAAMDEVALH (182 aa)) is the FAD-binding PCMH-type domain. Arg186 is an active-site residue. Ser235 acts as the Proton donor in catalysis. Residue Glu305 is part of the active site.

This sequence belongs to the MurB family. FAD is required as a cofactor.

The protein localises to the cytoplasm. It carries out the reaction UDP-N-acetyl-alpha-D-muramate + NADP(+) = UDP-N-acetyl-3-O-(1-carboxyvinyl)-alpha-D-glucosamine + NADPH + H(+). It functions in the pathway cell wall biogenesis; peptidoglycan biosynthesis. In terms of biological role, cell wall formation. This Bartonella henselae (strain ATCC 49882 / DSM 28221 / CCUG 30454 / Houston 1) (Rochalimaea henselae) protein is UDP-N-acetylenolpyruvoylglucosamine reductase.